A 79-amino-acid polypeptide reads, in one-letter code: Exodeoxyribonuclease 7 small subunit (79 aa).

This sequence belongs to the XseB family. In terms of assembly, heterooligomer composed of large and small subunits.

The protein localises to the cytoplasm. The enzyme catalyses Exonucleolytic cleavage in either 5'- to 3'- or 3'- to 5'-direction to yield nucleoside 5'-phosphates.. Functionally, bidirectionally degrades single-stranded DNA into large acid-insoluble oligonucleotides, which are then degraded further into small acid-soluble oligonucleotides. The chain is Exodeoxyribonuclease 7 small subunit from Syntrophus aciditrophicus (strain SB).